An 81-amino-acid polypeptide reads, in one-letter code: Protein RADIALIS-like 3 (81 aa).

Residues 7–62 (SSSASWTRKENKLFERALATYDQDTPDRWHNVARAVGGKSAEEVRRHYELLIRDVN) form the SANT domain.

Expressed just outside the vascular bundles in the rosette stem and the leaf traces. Not detected in floral primordia.

Its subcellular location is the nucleus. Probable transcription factor. This Arabidopsis thaliana (Mouse-ear cress) protein is Protein RADIALIS-like 3 (RL3).